Reading from the N-terminus, the 509-residue chain is Maturase K (509 aa).

It belongs to the intron maturase 2 family. MatK subfamily.

The protein localises to the plastid. It localises to the chloroplast. In terms of biological role, usually encoded in the trnK tRNA gene intron. Probably assists in splicing its own and other chloroplast group II introns. This is Maturase K from Anthocercis angustifolia (Narrow-leaf ray-flower).